Reading from the N-terminus, the 398-residue chain is Argininosuccinate synthase (398 aa).

8–16 (AYSGGLDTS) serves as a coordination point for ATP. Tyr-87 is a binding site for L-citrulline. Gly-117 provides a ligand contact to ATP. Residues Thr-119, Asn-123, and Asp-124 each contribute to the L-aspartate site. Residue Asn-123 participates in L-citrulline binding. L-citrulline is bound by residues Arg-127, Ser-175, Glu-260, and Tyr-272.

It belongs to the argininosuccinate synthase family. Type 1 subfamily. In terms of assembly, homotetramer.

It is found in the cytoplasm. The catalysed reaction is L-citrulline + L-aspartate + ATP = 2-(N(omega)-L-arginino)succinate + AMP + diphosphate + H(+). The protein operates within amino-acid biosynthesis; L-arginine biosynthesis; L-arginine from L-ornithine and carbamoyl phosphate: step 2/3. This Mycobacterium tuberculosis (strain ATCC 25618 / H37Rv) protein is Argininosuccinate synthase.